The chain runs to 233 residues: Orotidine 5'-phosphate decarboxylase (233 aa).

Substrate contacts are provided by residues Asp13, Lys35, Asp62–Thr71, Thr122, Arg182, Gln191, Gly211, and Arg212. Lys64 functions as the Proton donor in the catalytic mechanism.

It belongs to the OMP decarboxylase family. Type 1 subfamily. As to quaternary structure, homodimer.

The catalysed reaction is orotidine 5'-phosphate + H(+) = UMP + CO2. The protein operates within pyrimidine metabolism; UMP biosynthesis via de novo pathway; UMP from orotate: step 2/2. Functionally, catalyzes the decarboxylation of orotidine 5'-monophosphate (OMP) to uridine 5'-monophosphate (UMP). This Pseudomonas entomophila (strain L48) protein is Orotidine 5'-phosphate decarboxylase.